We begin with the raw amino-acid sequence, 308 residues long: Membrane protein insertase YidC 1 (308 aa).

The N-terminal stretch at 1 to 22 (MKSIKRFALSAMGAAMLLVLTG) is a signal peptide. A lipid anchor (N-palmitoyl cysteine) is attached at Cys-23. Cys-23 carries the S-diacylglycerol cysteine lipid modification. The next 5 helical transmembrane spans lie at 60–80 (FGVAIIIVTIIVRLIILPLGI), 135–155 (FGGVGCFPILLQMPFFSAIYF), 168–188 (YLGIPLGSPSMILVACAGVLY), 211–225 (MIYMSPLMIVVFSLF), and 230–252 (VTLYWVVGGFMMILQQFIVNYIV). The disordered stretch occupies residues 263-308 (ELAKNPSKASAFSTPSGRKDVTPEQPTAITSKKKHKNRNAGKQRSR). Positions 269–278 (SKASAFSTPS) are enriched in polar residues. A compositionally biased stretch (basic residues) spans 293-308 (SKKKHKNRNAGKQRSR).

Belongs to the OXA1/ALB3/YidC family. Type 2 subfamily.

The protein resides in the cell membrane. Its function is as follows. Required for the insertion and/or proper folding and/or complex formation of integral membrane proteins into the membrane. Involved in integration of membrane proteins that insert both dependently and independently of the Sec translocase complex, as well as at least some lipoproteins. The protein is Membrane protein insertase YidC 1 of Streptococcus pneumoniae (strain ATCC BAA-255 / R6).